The primary structure comprises 106 residues: CRISPR-associated endoribonuclease Cas2 (106 aa).

A Mg(2+)-binding site is contributed by aspartate 22.

Belongs to the CRISPR-associated endoribonuclease Cas2 protein family. In terms of assembly, homodimer, forms a heterotetramer with a Cas1 homodimer. Mg(2+) serves as cofactor.

Its function is as follows. CRISPR (clustered regularly interspaced short palindromic repeat), is an adaptive immune system that provides protection against mobile genetic elements (viruses, transposable elements and conjugative plasmids). CRISPR clusters contain sequences complementary to antecedent mobile elements and target invading nucleic acids. CRISPR clusters are transcribed and processed into CRISPR RNA (crRNA). Functions as a ssRNA-specific endoribonuclease. Involved in the integration of spacer DNA into the CRISPR cassette. The polypeptide is CRISPR-associated endoribonuclease Cas2 (Fusobacterium nucleatum subsp. nucleatum (strain ATCC 25586 / DSM 15643 / BCRC 10681 / CIP 101130 / JCM 8532 / KCTC 2640 / LMG 13131 / VPI 4355)).